The following is a 148-amino-acid chain: Ferredoxin-thioredoxin reductase catalytic chain, chloroplastic (148 aa).

A chloroplast-targeting transit peptide spans M1–K35. Residue C87 coordinates [4Fe-4S] cluster. C89 functions as the Nucleophile in the catalytic mechanism. Cysteines 89 and 119 form a disulfide. 3 residues coordinate [4Fe-4S] cluster: C106, C108, and C117.

This sequence belongs to the ferredoxin thioredoxin reductase beta subunit family. In terms of assembly, heterodimer of subunit A (variable subunit) and subunit B (catalytic subunit). Heterodimeric FTR forms a complex with ferredoxin and thioredoxin. It depends on [4Fe-4S] cluster as a cofactor.

It is found in the plastid. It localises to the chloroplast. It carries out the reaction [thioredoxin]-disulfide + 2 reduced [2Fe-2S]-[ferredoxin] + 2 H(+) = [thioredoxin]-dithiol + 2 oxidized [2Fe-2S]-[ferredoxin]. In terms of biological role, catalytic subunit of the ferredoxin-thioredoxin reductase (FTR), which catalyzes the two-electron reduction of thioredoxins by the electrons provided by reduced ferredoxin. The protein is Ferredoxin-thioredoxin reductase catalytic chain, chloroplastic of Spinacia oleracea (Spinach).